Here is a 456-residue protein sequence, read N- to C-terminus: Heme sensor protein HssS (456 aa).

Helical transmembrane passes span Ile9 to Asn29 and Thr164 to Ser184. The region spanning Tyr186–Asp238 is the HAMP domain. In terms of domain architecture, Histidine kinase spans Asn246–Asn456. His249 carries the post-translational modification Phosphohistidine; by autocatalysis.

Post-translationally, autophosphorylated.

Its subcellular location is the cell membrane. It catalyses the reaction ATP + protein L-histidine = ADP + protein N-phospho-L-histidine.. In terms of biological role, member of the two-component regulatory system HssS/HssR involved in intracellular heme homeostasis and tempering of staphylococcal virulence. HssS functions as a heme sensor histidine kinase which is autophosphorylated at a histidine residue and transfers its phosphate group to an aspartate residue of HssR. HssR/HssS activates the expression of hrtAB, an efflux pump, in response to extracellular heme, hemin, hemoglobin or blood. The chain is Heme sensor protein HssS (hssS) from Staphylococcus haemolyticus (strain JCSC1435).